Consider the following 352-residue polypeptide: tRNA pseudouridine synthase D (352 aa).

Asp78 (nucleophile) is an active-site residue. Positions 153–299 (GVPNYYGEQR…LDQDRRPLLL (147 aa)) constitute a TRUD domain.

It belongs to the pseudouridine synthase TruD family.

The enzyme catalyses uridine(13) in tRNA = pseudouridine(13) in tRNA. In terms of biological role, responsible for synthesis of pseudouridine from uracil-13 in transfer RNAs. In Aeromonas salmonicida (strain A449), this protein is tRNA pseudouridine synthase D.